The following is a 398-amino-acid chain: Flavin-containing monooxygenase ustF1 (398 aa).

A signal peptide spans 1–22 (MTVSQVRRVAVIGAGISGVVST). Residue 13–18 (GAGISG) coordinates FAD. Residues asparagine 53, asparagine 57, asparagine 119, and asparagine 126 are each glycosylated (N-linked (GlcNAc...) asparagine). Residue 194 to 199 (GGGVSS) coordinates NADP(+). Asparagine 236, asparagine 243, and asparagine 271 each carry an N-linked (GlcNAc...) asparagine glycan.

Belongs to the FMO family.

It functions in the pathway mycotoxin biosynthesis. In terms of biological role, flavin-containing monooxygenase; part of the gene cluster that mediates the biosynthesis of the secondary metabolite ustiloxin B, an antimitotic tetrapeptide. First, ustA is processed by the subtilisin-like endoprotease Kex2 that is outside the ustiloxin B gene cluster, at the C-terminal side of Arg-Lys, after transfer to Golgi apparatus through the endoplasmic reticulum (ER). Cleavage by KEX2 generates 16 peptides YAIG-I to YAIG-XVI. To process the precursor peptide further, at least two peptidases are necessary to cleave the N-terminal and C-terminal sides of the Tyr-Ala-Ile-Gly core peptide which serves as backbone for the synthesis of ustiloxin B, through cyclization and modification of the tyrosine with a non-protein coding amino acid, norvaline. One of the two peptidases must be the serine peptidase ustP; and the other pepdidase is probably ustH. Macrocyclization of the core peptide derived from ustA requires the tyrosinase ustQ, as well as the homologous oxidases ustYa and ustYb, and leads to the production of the first cyclization product N-desmethylustiloxin F. For the formation of N-desmethylustiloxin F, three oxidation steps are required, hydroxylation at the benzylic position, hydroxylation at either the aromatic ring of Tyr or beta-position of Ile, and oxidative cyclization. UstQ may catalyze the oxidation of a phenol moiety, whereas the ustYa and ustYb are most likely responsible for the remaining two-step oxidations. N-desmethylustiloxin F is then methylated by ustM to yield ustiloxin F which in turn substrate of the cytochrome P450 monooxygenase ustC which catalyzes the formation of S-deoxyustiloxin H. The flavoprotein monooxygenases ustF1 and ustF2 then participate in the modification of the side chain of S-deoxyustiloxin H, leading to the synthesis of an oxime intermediate, via ustiloxin H. Finally, carboxylative dehydration performed by the cysteine desulfurase-like protein ustD yields ustiloxin B. The polypeptide is Flavin-containing monooxygenase ustF1 (Aspergillus flavus (strain ATCC 200026 / FGSC A1120 / IAM 13836 / NRRL 3357 / JCM 12722 / SRRC 167)).